Reading from the N-terminus, the 156-residue chain is Ribosomal RNA large subunit methyltransferase H (156 aa).

S-adenosyl-L-methionine-binding positions include Leu73, Gly104, and 123–128 (ISSMTL).

It belongs to the RNA methyltransferase RlmH family. As to quaternary structure, homodimer.

The protein localises to the cytoplasm. It carries out the reaction pseudouridine(1915) in 23S rRNA + S-adenosyl-L-methionine = N(3)-methylpseudouridine(1915) in 23S rRNA + S-adenosyl-L-homocysteine + H(+). Specifically methylates the pseudouridine at position 1915 (m3Psi1915) in 23S rRNA. This chain is Ribosomal RNA large subunit methyltransferase H, found in Burkholderia lata (strain ATCC 17760 / DSM 23089 / LMG 22485 / NCIMB 9086 / R18194 / 383).